The chain runs to 264 residues: Apolipoprotein A-I (264 aa).

An N-terminal signal peptide occupies residues 1–18 (MKAVVLAVALVFLTGSQA). Repeat copies occupy residues 67-88 (LNLL…ERLG) and 89-110 (PLTR…QEMN). Positions 67–264 (LNLLENWDTL…DKARETLTAQ (198 aa)) are 10 X approximate tandem repeats. Position 109 is a methionine sulfoxide (Met-109). One copy of the 3; half-length repeat lies at 111–121 (KDLEEVKQNVQ). 3 tandem repeats follow at residues 122-143 (PYLD…QRVA), 144-165 (PLGA…GKLS), and 166-187 (PVAE…TQLA). The 7; truncated repeat unit spans residues 188–207 (PHSDKLRESLAQRLAELKSN). Copy 8 of the repeat occupies 208-229 (PTLNEYHTRAKTHLNTFGEKAR). A 9; half-length repeat occupies 230-240 (PALEDLRHTLI). The stretch at 241–264 (PILDTLKTKVKSVIDKARETLTAQ) is repeat 10.

It belongs to the apolipoprotein A1/A4/E family. In terms of assembly, homodimer. Interacts with APOA1BP and CLU. Component of a sperm activating protein complex (SPAP), consisting of APOA1, an immunoglobulin heavy chain, an immunoglobulin light chain and albumin. Interacts with NDRG1. Interacts with SCGB3A2. Interacts with NAXE and YJEFN3. Glycosylated. In terms of processing, palmitoylated. Post-translationally, phosphorylation sites are present in the extracellular medium.

Its subcellular location is the secreted. Participates in the reverse transport of cholesterol from tissues to the liver for excretion by promoting cholesterol efflux from tissues and by acting as a cofactor for the lecithin cholesterol acyltransferase (LCAT). As part of the SPAP complex, activates spermatozoa motility. In Mus pahari (Gairdner's shrew-mouse), this protein is Apolipoprotein A-I (Apoa1).